Consider the following 155-residue polypeptide: 6,7-dimethyl-8-ribityllumazine synthase (155 aa).

5-amino-6-(D-ribitylamino)uracil is bound by residues phenylalanine 22, 56–58, and 80–82; these read AFE and AVI. Position 85–86 (85–86) interacts with (2S)-2-hydroxy-3-oxobutyl phosphate; sequence NT. The active-site Proton donor is the histidine 88. Phenylalanine 113 lines the 5-amino-6-(D-ribitylamino)uracil pocket. Arginine 127 is a (2S)-2-hydroxy-3-oxobutyl phosphate binding site.

It belongs to the DMRL synthase family.

It catalyses the reaction (2S)-2-hydroxy-3-oxobutyl phosphate + 5-amino-6-(D-ribitylamino)uracil = 6,7-dimethyl-8-(1-D-ribityl)lumazine + phosphate + 2 H2O + H(+). It functions in the pathway cofactor biosynthesis; riboflavin biosynthesis; riboflavin from 2-hydroxy-3-oxobutyl phosphate and 5-amino-6-(D-ribitylamino)uracil: step 1/2. Catalyzes the formation of 6,7-dimethyl-8-ribityllumazine by condensation of 5-amino-6-(D-ribitylamino)uracil with 3,4-dihydroxy-2-butanone 4-phosphate. This is the penultimate step in the biosynthesis of riboflavin. The sequence is that of 6,7-dimethyl-8-ribityllumazine synthase from Streptococcus pneumoniae serotype 2 (strain D39 / NCTC 7466).